Reading from the N-terminus, the 128-residue chain is uncharacterized protein (128 aa).

3 helical membrane-spanning segments follow: residues 1–21 (MLVFSFLFVVVSINLNALIFL), 51–71 (VRVEAIAPFMMCLGSLGAILG), and 76–96 (ANFLLLSYNVINNPVVLVYYV).

It is found in the membrane. This is an uncharacterized protein from Saccharomyces cerevisiae (strain ATCC 204508 / S288c) (Baker's yeast).